Reading from the N-terminus, the 570-residue chain is MALRRLSLSRLSTESDSEDLPTFAFLKKEPSSTNRKPPQRAKNIVVVTSDSEASCPPSPGLKGPPCVPSAAGAPPQAGPVRVLSSSSEDEDVFVPLAERITCKLLTSKQLCPELSSSSLKTGLDGQNNASAPCDWKRQPWPKIPDVPLHGALEKSAANDEDSLLDDQCRQLPTYQATCRELAVSKTNSDRPLPKKRTKHIQTVQSGGSQGCWRPGQASRKENTPRQHERKKKAEMIKRLKAQRPEECLKHIVVVLDPVLLQMEGGGQLLGALQAMECSCVIEVQAIPRSITWRRRRTELVEDGDDWMEEPTILVLVLAEVFMSMAYNLKQASPSSTEKGKETLRSFVTDVTAKTGKALSLVIVDQEKCFRPQNPPRRRKSGMANKQAKAKHQQRQESSTGLMVSRADMEKALVDLQLYTEAQAWMVQSWKELADFTCAFTKAVAEAPFKKLRDQVTFSFFLEKDWAGGMKVDQSGRGLALIWRRQIQQLNRVSSEMASAIVDAYPSPQLLVQAYQRCFSEQERQNLLADIQVRRGEGVTATSRRVGPELSRRIYLQMTTAQPDLILDSVD.

The segment covering 1 to 14 (MALRRLSLSRLSTE) has biased composition (low complexity). Residues 1 to 86 (MALRRLSLSR…AGPVRVLSSS (86 aa)) are disordered. Phosphoserine is present on residues S12 and S15. Residues 68-79 (PSAAGAPPQAGP) show a composition bias toward low complexity. S84, S85, and S87 each carry phosphoserine. K103 participates in a covalent cross-link: Glycyl lysine isopeptide (Lys-Gly) (interchain with G-Cter in SUMO2). S117 carries the post-translational modification Phosphoserine. Polar residues predominate over residues 118–130 (SLKTGLDGQNNAS). 3 disordered regions span residues 118-147 (SLKT…PDVP), 185-231 (KTNS…ERKK), and 370-400 (RPQN…SSTG). Residues K136 and K142 each participate in a glycyl lysine isopeptide (Lys-Gly) (interchain with G-Cter in SUMO2) cross-link. The segment covering 218 to 231 (SRKENTPRQHERKK) has biased composition (basic and acidic residues). Residues 249–456 (KHIVVVLDPV…PFKKLRDQVT (208 aa)) are nuclease-like domain; forms the post-nick DNA binding interface and is involved in DNA recognition and bending. A helix-hairpin-helix (2HhH); forms the pre-nick DNA binding interface and is involved in DNA recognition and bending region spans residues 476–570 (RGLALIWRRQ…QPDLILDSVD (95 aa)).

Belongs to the EME1/MMS4 family. In terms of assembly, part of the heterodimeric MUS81-EME1 complex. As to expression, weakly expressed in brain, heart, kidney, liver, lung, muscle, skin, small intestine, spleen, stomach, testis and thymus. Expressed in bone marrow. Also expressed in embryonic stem cells (ES cells).

The protein resides in the nucleus. It is found in the nucleolus. In terms of biological role, non-catalytic subunit of the structure-specific, heterodimeric DNA endonuclease MUS81-EME1 which is involved in the maintenance of genome stability. In the complex, EME1 is required for DNA cleavage, participating in DNA recognition and bending. MUS81-EME1 cleaves 3'-flaps and nicked Holliday junctions, and exhibit limited endonuclease activity with 5' flaps and nicked double-stranded DNAs. Active during prometaphase, MUS81-EME1 resolves mitotic recombination intermediates, including Holliday junctions, which form during homologous recombination. The sequence is that of Structure-specific endonuclease subunit EME1 from Mus musculus (Mouse).